A 448-amino-acid chain; its full sequence is Homogentisate 1,2-dioxygenase (448 aa).

The Proton acceptor role is filled by H303. Positions 346 and 352 each coordinate Fe cation. Residues Y361 and H382 each contribute to the homogentisate site. A Fe cation-binding site is contributed by H382.

This sequence belongs to the homogentisate dioxygenase family. In terms of assembly, hexamer; dimer of trimers. It depends on Fe cation as a cofactor.

It carries out the reaction homogentisate + O2 = 4-maleylacetoacetate + H(+). Its pathway is amino-acid degradation; L-phenylalanine degradation; acetoacetate and fumarate from L-phenylalanine: step 4/6. In terms of biological role, involved in the catabolism of homogentisate (2,5-dihydroxyphenylacetate or 2,5-OH-PhAc), a central intermediate in the degradation of phenylalanine and tyrosine. Catalyzes the oxidative ring cleavage of the aromatic ring of homogentisate to yield maleylacetoacetate. This is Homogentisate 1,2-dioxygenase from Nitrobacter hamburgensis (strain DSM 10229 / NCIMB 13809 / X14).